A 535-amino-acid chain; its full sequence is Glucans biosynthesis protein D 1 (535 aa).

The tat-type signal signal peptide spans 1–28 (MHRRDLLKQLAAGFLALAPGLTPSTASA). Positions 275–287 (RTDRAGDRQSAAR) are insert.

It belongs to the OpgD/OpgG family. Predicted to be exported by the Tat system. The position of the signal peptide cleavage has not been experimentally proven.

It localises to the periplasm. It participates in glycan metabolism; osmoregulated periplasmic glucan (OPG) biosynthesis. Its function is as follows. Probably involved in the control of the structural glucose backbone of osmoregulated periplasmic glucans (OPGs). The protein is Glucans biosynthesis protein D 1 (opgD1) of Ralstonia nicotianae (strain ATCC BAA-1114 / GMI1000) (Ralstonia solanacearum).